A 281-amino-acid polypeptide reads, in one-letter code: Endochitinase At2g43610 (281 aa).

The N-terminal stretch at 1 to 28 is a signal peptide; the sequence is MATQNAILKKALIIFLFTLTIMTGTAFS. Positions 29–66 constitute a Chitin-binding type-1 domain; that stretch reads QNCGTNGCKGNMCCSRWGYCGTTKAYCGTGCQSGPCNS. Cystine bridges form between Cys31–Cys42, Cys36–Cys48, Cys41–Cys55, and Cys59–Cys64. The tract at residues 86-281 is catalytic; it reads GTIASVITPA…GVTPGTNLSC (196 aa). Catalysis depends on Glu148, which acts as the Proton donor. An N-linked (GlcNAc...) asparagine glycan is attached at Asn278.

It belongs to the glycosyl hydrolase 19 family. Chitinase class I subfamily.

The enzyme catalyses Random endo-hydrolysis of N-acetyl-beta-D-glucosaminide (1-&gt;4)-beta-linkages in chitin and chitodextrins.. The protein is Endochitinase At2g43610 of Arabidopsis thaliana (Mouse-ear cress).